The sequence spans 1053 residues: Mediator of RNA polymerase II transcription subunit 16 (1053 aa).

Positions 139–170 (KTEGNTEKNKDTKQIGNGSGTNGHGDSPINTP) are disordered. A compositionally biased stretch (basic and acidic residues) spans 142-151 (GNTEKNKDTK).

This sequence belongs to the Mediator complex subunit 16 family. As to quaternary structure, component of the Mediator complex.

Its subcellular location is the nucleus. Component of the Mediator complex, a coactivator involved in the regulated transcription of nearly all RNA polymerase II-dependent genes. Mediator functions as a bridge to convey information from gene-specific regulatory proteins to the basal RNA polymerase II transcription machinery. Mediator is recruited to promoters by direct interactions with regulatory proteins and serves as a scaffold for the assembly of a functional preinitiation complex with RNA polymerase II and the general transcription factors. This chain is Mediator of RNA polymerase II transcription subunit 16 (SIN4), found in Candida albicans (strain SC5314 / ATCC MYA-2876) (Yeast).